We begin with the raw amino-acid sequence, 327 residues long: 2-phosphoglycerate kinase (327 aa).

Basic and acidic residues predominate over residues M1 to R20. Residues M1–I27 form a disordered region. Residues R25–E111 enclose the ATP-cone domain.

This sequence belongs to the 2-phosphoglycerate kinase family. A divalent metal cation is required as a cofactor.

The catalysed reaction is (2R)-2-phosphoglycerate + ATP = (2R)-2,3-bisphosphoglycerate + ADP + H(+). It functions in the pathway thermoadapter biosynthesis; cyclic 2,3-diphosphoglycerate biosynthesis; cyclic 2,3-diphosphoglycerate from 2-phospho-D-glycerate: step 1/2. Functionally, catalyzes the phosphorylation of 2-phosphoglycerate to 2,3-diphosphoglycerate. Involved in the biosynthesis of cyclic 2,3-bisphosphoglycerate, a thermoprotectant. In Methanopyrus kandleri (strain AV19 / DSM 6324 / JCM 9639 / NBRC 100938), this protein is 2-phosphoglycerate kinase.